A 518-amino-acid polypeptide reads, in one-letter code: Calcium/calmodulin-dependent protein kinase kinase cmkC (518 aa).

Residues 1-72 (MANEGAGSLQ…SEYTLSQDDG (72 aa)) form a disordered region. 2 stretches are compositionally biased toward polar residues: residues 8–17 (SLQQDASPGS) and 60–71 (NARSEYTLSQDD). A Protein kinase domain is found at 81-376 (YVIKQEIGRG…MDELREHPWV (296 aa)). ATP-binding positions include 87 to 95 (IGRGSFGAV) and Lys109. The segment at 119-149 (RAKSQLLRQSRGPKRSSRWPKLPFSSPGTGT) is disordered. Asp243 acts as the Proton acceptor in catalysis. The autoinhibitory domain stretch occupies residues 404-409 (FSAITK). Residues 407-431 (ITKNFGHVLAVMKAAKKFKSLQGPT) form a calmodulin-binding region. Positions 453-472 (PTQMDPEESVSLPSPLPYKK) are disordered.

It belongs to the protein kinase superfamily. Ser/Thr protein kinase family.

The enzyme catalyses L-seryl-[protein] + ATP = O-phospho-L-seryl-[protein] + ADP + H(+). It catalyses the reaction L-threonyl-[protein] + ATP = O-phospho-L-threonyl-[protein] + ADP + H(+). Its activity is regulated as follows. Activated by Ca(2+)/calmodulin. Binding of calmodulin may relieve intrasteric autoinhibition. Its function is as follows. Calcium/calmodulin-dependent protein kinase that operates in the calcium-triggered CaMKK-CaMK1 signaling cascade. Phosphorylates and activates cmkB in vitro. Required in G1-phase of the cell cycle for proper timing of the initial nuclear division after germination as well as for subsequent nuclear division cycles. Required for the normal temporal regulation of nimX activity. This chain is Calcium/calmodulin-dependent protein kinase kinase cmkC, found in Emericella nidulans (Aspergillus nidulans).